The sequence spans 93 residues: MDGIKYAVFTEKSIRLLGNNQYTSNVESGSTRTEIKHWVELFFGVKVIAMNSHRLPGKGRRMGPIMGHTMHYRRMIITLQPGYSIPPLIEKRT.

It belongs to the universal ribosomal protein uL23 family. In terms of assembly, part of the 50S ribosomal subunit.

Its subcellular location is the plastid. It is found in the chloroplast. Its function is as follows. Binds to 23S rRNA. The protein is Large ribosomal subunit protein uL23cz/uL23cy (rpl23-A) of Drimys granadensis.